An 827-amino-acid polypeptide reads, in one-letter code: Periplasmic nitrate reductase (827 aa).

Residues 1 to 32 (MNLSRRDFMKANAALAAASVAGLIIPVKNVNA) constitute a signal peptide (tat-type signal). In terms of domain architecture, 4Fe-4S Mo/W bis-MGD-type spans 37–93 (ITWDKAVCRFCGTGCAVLVGTKDGRVVASQGDPDAEVNRGLNCIKGYFLPKIMYGKD). [4Fe-4S] cluster contacts are provided by C44, C47, C51, and C79. Mo-bis(molybdopterin guanine dinucleotide) contacts are provided by residues K81, Q148, N173, C177, 210–217 (WGSNMAEM), 242–246 (STFEH), 261–263 (QSD), M372, Q376, N482, 508–509 (SD), K531, D558, and 717–726 (TGRILEHWHT). Residue F793 coordinates substrate. Mo-bis(molybdopterin guanine dinucleotide) is bound by residues N801 and K818.

Belongs to the prokaryotic molybdopterin-containing oxidoreductase family. NasA/NapA/NarB subfamily. As to quaternary structure, component of the periplasmic nitrate reductase NapAB complex composed of NapA and NapB. It depends on [4Fe-4S] cluster as a cofactor. The cofactor is Mo-bis(molybdopterin guanine dinucleotide). Post-translationally, predicted to be exported by the Tat system. The position of the signal peptide cleavage has not been experimentally proven.

It localises to the periplasm. The catalysed reaction is 2 Fe(II)-[cytochrome] + nitrate + 2 H(+) = 2 Fe(III)-[cytochrome] + nitrite + H2O. Functionally, catalytic subunit of the periplasmic nitrate reductase complex NapAB. Receives electrons from NapB and catalyzes the reduction of nitrate to nitrite. The polypeptide is Periplasmic nitrate reductase (Histophilus somni (strain 2336) (Haemophilus somnus)).